The following is a 221-amino-acid chain: 7-cyano-7-deazaguanine synthase (221 aa).

An ATP-binding site is contributed by 8–18 (MSGGMDSTLCA). Residues Cys187, Cys195, Cys198, and Cys201 each contribute to the Zn(2+) site.

Belongs to the QueC family. It depends on Zn(2+) as a cofactor.

It catalyses the reaction 7-carboxy-7-deazaguanine + NH4(+) + ATP = 7-cyano-7-deazaguanine + ADP + phosphate + H2O + H(+). It participates in purine metabolism; 7-cyano-7-deazaguanine biosynthesis. Its function is as follows. Catalyzes the ATP-dependent conversion of 7-carboxy-7-deazaguanine (CDG) to 7-cyano-7-deazaguanine (preQ(0)). The polypeptide is 7-cyano-7-deazaguanine synthase (Campylobacter concisus (strain 13826)).